The primary structure comprises 285 residues: Prephenate dehydratase (285 aa).

One can recognise a Prephenate dehydratase domain in the interval Lys2–Pro183. One can recognise an ACT domain in the interval Met204 to Gln281.

The catalysed reaction is prephenate + H(+) = 3-phenylpyruvate + CO2 + H2O. It functions in the pathway amino-acid biosynthesis; L-phenylalanine biosynthesis; phenylpyruvate from prephenate: step 1/1. This is Prephenate dehydratase (pheA) from Bacillus subtilis (strain 168).